The primary structure comprises 119 residues: SGSCEVKTCWKAMPPFRKVGNVLKEKFDGATEVEQKKIGSAKVLVPKNSQFKPHTDEDLVYLDSSPDFCDHDLKNGVLGTAGRQCNKTSKAIDGCELMCCGRGFHTEEVEIVERCSCKF.

Ser-1 carries the O-palmitoleoyl serine; by PORCN lipid modification. 2 disulfide bridges follow: Cys-69/Cys-100 and Cys-85/Cys-95. Asn-86 carries N-linked (GlcNAc...) asparagine glycosylation.

The protein belongs to the Wnt family. In terms of processing, palmitoleoylation is required for efficient binding to frizzled receptors. Depalmitoleoylation leads to Wnt signaling pathway inhibition.

It is found in the secreted. The protein resides in the extracellular space. The protein localises to the extracellular matrix. In terms of biological role, ligand for members of the frizzled family of seven transmembrane receptors. Plays an important role in embryonic development. In Plethodon jordani (Red-cheeked salamander), this protein is Protein Wnt-4 (WNT-4).